A 71-amino-acid polypeptide reads, in one-letter code: DNA-directed RNA polymerase subunit epsilon (71 aa).

The protein belongs to the RNA polymerase subunit epsilon family. RNAP is composed of a core of 2 alpha, a beta and a beta' subunit. The core is associated with a delta subunit, and at least one of epsilon or omega. When a sigma factor is associated with the core the holoenzyme is formed, which can initiate transcription.

It catalyses the reaction RNA(n) + a ribonucleoside 5'-triphosphate = RNA(n+1) + diphosphate. A non-essential component of RNA polymerase (RNAP). In Geobacillus kaustophilus (strain HTA426), this protein is DNA-directed RNA polymerase subunit epsilon.